The following is a 664-amino-acid chain: Fructose-1,6-bisphosphatase class 3 (664 aa).

Belongs to the FBPase class 3 family. The cofactor is Mn(2+).

The catalysed reaction is beta-D-fructose 1,6-bisphosphate + H2O = beta-D-fructose 6-phosphate + phosphate. Its pathway is carbohydrate biosynthesis; gluconeogenesis. This Bacteroides fragilis (strain YCH46) protein is Fructose-1,6-bisphosphatase class 3.